We begin with the raw amino-acid sequence, 207 residues long: Thiamine-phosphate synthase (207 aa).

Residues 36 to 40 (QLRMK) and N68 contribute to the 4-amino-2-methyl-5-(diphosphooxymethyl)pyrimidine site. Mg(2+) contacts are provided by D69 and D88. S106 contributes to the 4-amino-2-methyl-5-(diphosphooxymethyl)pyrimidine binding site. 132 to 134 (TNT) serves as a coordination point for 2-[(2R,5Z)-2-carboxy-4-methylthiazol-5(2H)-ylidene]ethyl phosphate. K135 lines the 4-amino-2-methyl-5-(diphosphooxymethyl)pyrimidine pocket. Residues G162 and 182–183 (VS) contribute to the 2-[(2R,5Z)-2-carboxy-4-methylthiazol-5(2H)-ylidene]ethyl phosphate site.

The protein belongs to the thiamine-phosphate synthase family. It depends on Mg(2+) as a cofactor.

The enzyme catalyses 2-[(2R,5Z)-2-carboxy-4-methylthiazol-5(2H)-ylidene]ethyl phosphate + 4-amino-2-methyl-5-(diphosphooxymethyl)pyrimidine + 2 H(+) = thiamine phosphate + CO2 + diphosphate. It carries out the reaction 2-(2-carboxy-4-methylthiazol-5-yl)ethyl phosphate + 4-amino-2-methyl-5-(diphosphooxymethyl)pyrimidine + 2 H(+) = thiamine phosphate + CO2 + diphosphate. It catalyses the reaction 4-methyl-5-(2-phosphooxyethyl)-thiazole + 4-amino-2-methyl-5-(diphosphooxymethyl)pyrimidine + H(+) = thiamine phosphate + diphosphate. It participates in cofactor biosynthesis; thiamine diphosphate biosynthesis; thiamine phosphate from 4-amino-2-methyl-5-diphosphomethylpyrimidine and 4-methyl-5-(2-phosphoethyl)-thiazole: step 1/1. Functionally, condenses 4-methyl-5-(beta-hydroxyethyl)thiazole monophosphate (THZ-P) and 2-methyl-4-amino-5-hydroxymethyl pyrimidine pyrophosphate (HMP-PP) to form thiamine monophosphate (TMP). The polypeptide is Thiamine-phosphate synthase (Methanococcus maripaludis (strain C6 / ATCC BAA-1332)).